A 294-amino-acid polypeptide reads, in one-letter code: Foldase protein PrsA 1 (294 aa).

The signal sequence occupies residues 1–21 (MTKLKKVMISVIAATLLLLAG). A lipid anchor (N-palmitoyl cysteine) is attached at cysteine 22. Residue cysteine 22 is the site of S-diacylglycerol cysteine attachment. Residues 135–226 (EPDITVRHIL…YGYHLIQLVK (92 aa)) enclose the PpiC domain.

It belongs to the PrsA family.

Its subcellular location is the cell membrane. It carries out the reaction [protein]-peptidylproline (omega=180) = [protein]-peptidylproline (omega=0). Its function is as follows. Plays a major role in protein secretion by helping the post-translocational extracellular folding of several secreted proteins. This Listeria monocytogenes serotype 4b (strain F2365) protein is Foldase protein PrsA 1.